We begin with the raw amino-acid sequence, 378 residues long: 3-dehydroquinate synthase (378 aa).

NAD(+) is bound by residues 111-115 (GVIGD), 135-136 (TS), lysine 148, and lysine 157. Residues glutamate 190, histidine 252, and histidine 271 each coordinate Zn(2+).

This sequence belongs to the sugar phosphate cyclases superfamily. Dehydroquinate synthase family. NAD(+) is required as a cofactor. Requires Co(2+) as cofactor. The cofactor is Zn(2+).

The protein resides in the cytoplasm. The enzyme catalyses 7-phospho-2-dehydro-3-deoxy-D-arabino-heptonate = 3-dehydroquinate + phosphate. The protein operates within metabolic intermediate biosynthesis; chorismate biosynthesis; chorismate from D-erythrose 4-phosphate and phosphoenolpyruvate: step 2/7. Its function is as follows. Catalyzes the conversion of 3-deoxy-D-arabino-heptulosonate 7-phosphate (DAHP) to dehydroquinate (DHQ). This chain is 3-dehydroquinate synthase, found in Mesorhizobium japonicum (strain LMG 29417 / CECT 9101 / MAFF 303099) (Mesorhizobium loti (strain MAFF 303099)).